The sequence spans 231 residues: Small ribosomal subunit protein uS3 (231 aa).

The KH type-2 domain maps to 17-86 (VEQYLNKELK…SPQVEVQQVA (70 aa)).

The protein belongs to the universal ribosomal protein uS3 family. In terms of assembly, part of the 30S ribosomal subunit.

Functionally, binds the lower part of the 30S subunit head. This is Small ribosomal subunit protein uS3 from Methanocorpusculum labreanum (strain ATCC 43576 / DSM 4855 / Z).